The sequence spans 227 residues: UPF0758 protein LPC_1989 (227 aa).

One can recognise an MPN domain in the interval 102 to 225 (QLSNTQQTYA…YSIFAENKWV (124 aa)). 3 residues coordinate Zn(2+): histidine 173, histidine 175, and aspartate 186. A JAMM motif motif is present at residues 173 to 186 (HNHPSGLSDASQQD).

The protein belongs to the UPF0758 family.

The chain is UPF0758 protein LPC_1989 from Legionella pneumophila (strain Corby).